Reading from the N-terminus, the 159-residue chain is Urease subunit beta 2 (159 aa).

Residues 1 to 23 (MAKEPTEAAHPQPEQTKTNHKAH) are disordered.

The protein belongs to the urease beta subunit family. As to quaternary structure, heterotrimer of UreA (gamma), UreB (beta) and UreC (alpha) subunits. Three heterotrimers associate to form the active enzyme.

Its subcellular location is the cytoplasm. It carries out the reaction urea + 2 H2O + H(+) = hydrogencarbonate + 2 NH4(+). The protein operates within nitrogen metabolism; urea degradation; CO(2) and NH(3) from urea (urease route): step 1/1. This Brucella abortus biovar 1 (strain 9-941) protein is Urease subunit beta 2.